The sequence spans 159 residues: Capsid protein (159 aa).

Belongs to the virgaviridae capsid protein family.

It is found in the virion. Functionally, capsid protein self-assembles to form rod-shaped virions about 18 nm in diameter with a central canal enclosing the viral genomic RNA. This is Capsid protein (CP) from Tomato mosaic virus (strain Kazakh K2) (ToMV).